We begin with the raw amino-acid sequence, 589 residues long: Serine/threonine-protein kinase STE7 homolog (589 aa).

Positions M1–L18 are enriched in basic and acidic residues. Disordered stretches follow at residues M1 to N162 and R185 to S232. A compositionally biased stretch (low complexity) spans P24 to P33. The segment covering V57–M69 has biased composition (polar residues). The span at P92–S121 shows a compositional bias: low complexity. 2 stretches are compositionally biased toward polar residues: residues I127 to S136 and S144 to N162. A compositionally biased stretch (basic residues) spans R185–Q203. Low complexity predominate over residues I206–P220. In terms of domain architecture, Protein kinase spans L249–F565. ATP contacts are provided by residues L255–V263 and K278. D374 functions as the Proton acceptor in the catalytic mechanism. Residue S402 is modified to Phosphoserine. Position 408 is a phosphothreonine (T408). The segment at I473–Y499 is disordered.

The protein belongs to the protein kinase superfamily. STE Ser/Thr protein kinase family. MAP kinase kinase subfamily.

The catalysed reaction is L-seryl-[protein] + ATP = O-phospho-L-seryl-[protein] + ADP + H(+). It catalyses the reaction L-threonyl-[protein] + ATP = O-phospho-L-threonyl-[protein] + ADP + H(+). It carries out the reaction L-tyrosyl-[protein] + ATP = O-phospho-L-tyrosyl-[protein] + ADP + H(+). The sequence is that of Serine/threonine-protein kinase STE7 homolog (HST7) from Candida albicans (strain WO-1) (Yeast).